Consider the following 646-residue polypeptide: Probable lysosomal cobalamin transporter (646 aa).

A run of 5 helical transmembrane segments spans residues leucine 11–threonine 31, isoleucine 42–leucine 62, threonine 102–phenylalanine 122, leucine 149–glycine 169, and alanine 193–threonine 213. A glycan (N-linked (GlcNAc...) asparagine) is linked at asparagine 297. 2 helical membrane-spanning segments follow: residues leucine 317 to threonine 337 and isoleucine 380 to isoleucine 400. Disordered stretches follow at residues glutamine 459–arginine 588 and valine 603–glutamate 623. Composition is skewed to low complexity over residues proline 460–alanine 490 and proline 517–arginine 543. An N-linked (GlcNAc...) asparagine glycan is attached at asparagine 545. Residues alanine 565–arginine 582 show a composition bias toward low complexity. N-linked (GlcNAc...) asparagine glycosylation is present at asparagine 626.

Belongs to the LIMR family. LMBRD1 subfamily.

It is found in the lysosome membrane. Probable lysosomal cobalamin transporter. Required to export cobalamin from lysosomes allowing its conversion to cofactors. This is Probable lysosomal cobalamin transporter from Chaetomium globosum (strain ATCC 6205 / CBS 148.51 / DSM 1962 / NBRC 6347 / NRRL 1970) (Soil fungus).